The sequence spans 342 residues: S-adenosylmethionine:tRNA ribosyltransferase-isomerase (342 aa).

The protein belongs to the QueA family. Monomer.

The protein localises to the cytoplasm. The catalysed reaction is 7-aminomethyl-7-carbaguanosine(34) in tRNA + S-adenosyl-L-methionine = epoxyqueuosine(34) in tRNA + adenine + L-methionine + 2 H(+). The protein operates within tRNA modification; tRNA-queuosine biosynthesis. In terms of biological role, transfers and isomerizes the ribose moiety from AdoMet to the 7-aminomethyl group of 7-deazaguanine (preQ1-tRNA) to give epoxyqueuosine (oQ-tRNA). This chain is S-adenosylmethionine:tRNA ribosyltransferase-isomerase, found in Streptococcus pyogenes serotype M6 (strain ATCC BAA-946 / MGAS10394).